The following is a 222-amino-acid chain: UPF0758 protein YicR (222 aa).

Residues 100-222 (PLLSPEMTRE…YVSFAERGWI (123 aa)) enclose the MPN domain. Zn(2+) is bound by residues His-171, His-173, and Asp-184. The JAMM motif signature appears at 171-184 (HNHPSGCAEPSKAD).

It belongs to the UPF0758 family. YicR subfamily.

In Escherichia coli (strain K12 / MC4100 / BW2952), this protein is UPF0758 protein YicR.